We begin with the raw amino-acid sequence, 386 residues long: MQVAAIFIDAEIEDQAQELRKFFKKLGAEISEDKSSKGIEDDLHKIIGVCDVCFKDPSLHTVEEIDAVLNSVVSIIVSIPLERGENLILAFCEKMTKAPDQKLAQVCLQSLWRLFSNLELTSPLRYHVYYHLVQVAKQVDQVKEVFTGVEQLKNQFTQCPPSNEQMQKLYRLLHDVLKDTNSELASKVMIELLGTYTAENASYAREDAMKCIVTALADPNTFLLDPLLSLKPVRFLEGELIHDLLSVFVSEKLPAYLQFYQNHKEFVNSQGLNHEQNIKKMRLLSFMQLAESNPEMTFAQLQDELQIGENDVEPFIIEVLKTKLVRARMDQKARKVHISSTMHRTFGRPQWQQLRDLLHAWKANLTLVQENMKSVAEAQIELTRKQ.

In terms of domain architecture, PCI spans 181–343 (NSELASKVMI…RKVHISSTMH (163 aa)).

The protein belongs to the eIF-3 subunit M family. In terms of assembly, component of the eukaryotic translation initiation factor 3 (eIF-3) complex.

It localises to the cytoplasm. Its function is as follows. Component of the eukaryotic translation initiation factor 3 (eIF-3) complex, which is involved in protein synthesis of a specialized repertoire of mRNAs and, together with other initiation factors, stimulates binding of mRNA and methionyl-tRNAi to the 40S ribosome. The eIF-3 complex specifically targets and initiates translation of a subset of mRNAs involved in cell proliferation. This is Eukaryotic translation initiation factor 3 subunit M from Culex quinquefasciatus (Southern house mosquito).